The primary structure comprises 139 residues: Natriuretic peptide Mf-NP (139 aa).

A signal peptide spans methionine 1–glycine 25. Residues lysine 26–glutamate 75 constitute a propeptide that is removed on maturation. Cysteines 86 and 102 form a disulfide. The propeptide occupies isoleucine 117–glycine 139.

It belongs to the natriuretic peptide family. In terms of tissue distribution, expressed by the venom gland.

The protein localises to the secreted. In terms of biological role, natriuretic peptide that dose-dependently induces the rapid relaxation of rat aortic strips phenylephrine-precontracted. Acts by stimulating cGMP production in a dose-dependent manner (by probably activating NPR1 and/or NPR2). May also show potent hypotensive effects. This is Natriuretic peptide Mf-NP from Micrurus fulvius (Eastern coral snake).